The chain runs to 359 residues: 3-dehydroquinate synthase (359 aa).

Residues 106-110, 130-131, lysine 143, and lysine 152 each bind NAD(+); these read GVVGD and TS. Zn(2+)-binding residues include glutamate 185, histidine 246, and histidine 263.

The protein belongs to the sugar phosphate cyclases superfamily. Dehydroquinate synthase family. The cofactor is Co(2+). Zn(2+) serves as cofactor. NAD(+) is required as a cofactor.

The protein resides in the cytoplasm. The enzyme catalyses 7-phospho-2-dehydro-3-deoxy-D-arabino-heptonate = 3-dehydroquinate + phosphate. It functions in the pathway metabolic intermediate biosynthesis; chorismate biosynthesis; chorismate from D-erythrose 4-phosphate and phosphoenolpyruvate: step 2/7. Functionally, catalyzes the conversion of 3-deoxy-D-arabino-heptulosonate 7-phosphate (DAHP) to dehydroquinate (DHQ). The polypeptide is 3-dehydroquinate synthase (Clostridium kluyveri (strain ATCC 8527 / DSM 555 / NBRC 12016 / NCIMB 10680 / K1)).